Consider the following 211-residue polypeptide: MTPVASTSALNLARSLYEAGIRNEAVLQAVANTPREQFLDAALGHKAYENTALPIGQGQTISQPYIVAKMTEIILQTKPTKVLEIGTGSGYQAAILARLVPQLFTVERIKSLQIQARQRLKRLDLHNIAFKYGDGWEGWPSKGPYDAIMVTAAASSIPDALVSQLADGGILVIPVGEIAQQLLKVTRSGDKYRSEVVEDVRFVPLINGELA.

Ser-62 is an active-site residue.

This sequence belongs to the methyltransferase superfamily. L-isoaspartyl/D-aspartyl protein methyltransferase family.

The protein localises to the cytoplasm. The enzyme catalyses [protein]-L-isoaspartate + S-adenosyl-L-methionine = [protein]-L-isoaspartate alpha-methyl ester + S-adenosyl-L-homocysteine. Its function is as follows. Catalyzes the methyl esterification of L-isoaspartyl residues in peptides and proteins that result from spontaneous decomposition of normal L-aspartyl and L-asparaginyl residues. It plays a role in the repair and/or degradation of damaged proteins. This is Protein-L-isoaspartate O-methyltransferase from Shewanella halifaxensis (strain HAW-EB4).